We begin with the raw amino-acid sequence, 302 residues long: NAD kinase (302 aa).

Asp-79 (proton acceptor) is an active-site residue. Residues 79–80 (DG), 153–154 (ND), Arg-181, Asp-183, 194–199 (TAYALS), Ala-218, and Gln-252 each bind NAD(+).

Belongs to the NAD kinase family. It depends on a divalent metal cation as a cofactor.

The protein localises to the cytoplasm. The catalysed reaction is NAD(+) + ATP = ADP + NADP(+) + H(+). Involved in the regulation of the intracellular balance of NAD and NADP, and is a key enzyme in the biosynthesis of NADP. Catalyzes specifically the phosphorylation on 2'-hydroxyl of the adenosine moiety of NAD to yield NADP. The chain is NAD kinase from Ralstonia nicotianae (strain ATCC BAA-1114 / GMI1000) (Ralstonia solanacearum).